Consider the following 548-residue polypeptide: Natural resistance-associated macrophage protein 1 (548 aa).

Positions 1–38 (MPGDMGPPKQGGTRYGSISSPPSPGPQQAPPGGTYLSE) are disordered. At 1-55 (MPGDMGPPKQGGTRYGSISSPPSPGPQQAPPGGTYLSEKIPIPDTESGAFSLRKL) the chain is on the cytoplasmic side. A helical transmembrane segment spans residues 56–73 (WAFTGPGFLMSIAFLDPG). Residues 74–82 (NIESDLQAG) lie on the Extracellular side of the membrane. A helical transmembrane segment spans residues 83-102 (AVAGFKLLWVLLWATVLGLL). Over 103-139 (CQRLAARLGVVTGKDLGEVCHLYYPKVPRILLWLTIE) the chain is Cytoplasmic. A helical membrane pass occupies residues 140–160 (LAIVGSDMQEVIGTAIAFSLL). At 161-164 (SAGR) the chain is on the extracellular side. The helical transmembrane segment at 165–184 (IPLWGGVLITIVDTFFFLFL) threads the bilayer. Residues 185 to 193 (DNYGLRKLE) lie on the Cytoplasmic side of the membrane. The helical transmembrane segment at 194 to 214 (AFFGFLITIMALTFGYEYVVA) threads the bilayer. The Extracellular segment spans residues 215–237 (RPAQGALLQGLFLPSCAGCGQPE). A helical transmembrane segment spans residues 238–256 (LLQAVGIVGAIIMPHNIYL). Residues 257-284 (HSSLVKSREVDRSRRADIREANMYFLIE) lie on the Cytoplasmic side of the membrane. A helical transmembrane segment spans residues 285–304 (ATIALSVSFLINLFVMAVFG). Over 305-346 (QAFYKQTNQAAFNICANSSLHDYATIFPRNNLTVAVDIYQGG) the chain is Extracellular. N-linked (GlcNAc...) asparagine glycosylation is found at asparagine 321 and asparagine 335. Residues 347–366 (VILGCLFGPAALYIWAVGLL) form a helical membrane-spanning segment. Over 367–397 (AAGQSSTMTGTYAGQFVMEGFLKLRWSRFAR) the chain is Cytoplasmic. A helical membrane pass occupies residues 398-415 (VLLTRSCAILPTVLVAVF). The Extracellular portion of the chain corresponds to 416 to 426 (RDLRDLSGLND). A helical membrane pass occupies residues 427–447 (LLNVLQSLLLPFAVLPILTFT). Residues 448-463 (SMPAVMQEFANGLVSK) lie on the Cytoplasmic side of the membrane. A helical transmembrane segment spans residues 464–485 (VISSSIMVLVCAVNLYFVISYV). Residues 486–493 (PSLPHPDY) are Extracellular-facing. A helical transmembrane segment spans residues 494 to 513 (FSLVALLAAAYLGLTTYLVW). The Cytoplasmic portion of the chain corresponds to 514-548 (TCLITQGATLLAHSSHQRFLYGLPEEDQENGRTSG).

Belongs to the NRAMP family.

Its subcellular location is the late endosome membrane. The protein resides in the lysosome membrane. The enzyme catalyses Zn(2+)(in) + H(+)(out) = Zn(2+)(out) + H(+)(in). The catalysed reaction is Fe(2+)(in) + H(+)(out) = Fe(2+)(out) + H(+)(in). It catalyses the reaction Mn(2+)(in) + H(+)(out) = Mn(2+)(out) + H(+)(in). Macrophage-specific antiporter that fluxes metal ions in either direction against a proton gradient. Localized to late endosomal lysosomal membranes, delivers bivalent cations from the cytosol into these acidic compartments where they may directly affect antimicrobial activity. Involved in iron metabolism and host natural resistance to infection with intracellular parasites. Pathogen resistance involves sequestration of Fe(2+) and Mn(2+), cofactors of both prokaryotic and eukaryotic catalases and superoxide dismutases, not only to protect the macrophage against its own generation of reactive oxygen species, but to deny the cations to the pathogen for synthesis of its protective enzymes. This chain is Natural resistance-associated macrophage protein 1 (SLC11A1), found in Cervus elaphus (Red deer).